The sequence spans 160 residues: ATP synthase subunit delta, mitochondrial (160 aa).

Residues methionine 1–tyrosine 22 constitute a mitochondrion transit peptide.

The protein belongs to the ATPase epsilon chain family. In terms of assembly, F-type ATPases have 2 components, CF(1) - the catalytic core - and CF(0) - the membrane proton channel. CF(1) has five subunits: alpha(3), beta(3), gamma(1), delta(1), epsilon(1). CF(0) has three main subunits: a, b and c.

It is found in the mitochondrion. The protein localises to the mitochondrion inner membrane. Mitochondrial membrane ATP synthase (F(1)F(0) ATP synthase or Complex V) produces ATP from ADP in the presence of a proton gradient across the membrane which is generated by electron transport complexes of the respiratory chain. F-type ATPases consist of two structural domains, F(1) - containing the extramembraneous catalytic core, and F(0) - containing the membrane proton channel, linked together by a central stalk and a peripheral stalk. During catalysis, ATP turnover in the catalytic domain of F(1) is coupled via a rotary mechanism of the central stalk subunits to proton translocation. Part of the complex F(1) domain and of the central stalk which is part of the complex rotary element. Rotation of the central stalk against the surrounding alpha(3)beta(3) subunits leads to hydrolysis of ATP in three separate catalytic sites on the beta subunits. The polypeptide is ATP synthase subunit delta, mitochondrial (ATP16) (Saccharomyces cerevisiae (strain ATCC 204508 / S288c) (Baker's yeast)).